A 304-amino-acid chain; its full sequence is UDP-3-O-acyl-N-acetylglucosamine deacetylase (304 aa).

3 residues coordinate Zn(2+): His79, His238, and Asp242. The Proton donor role is filled by His265.

This sequence belongs to the LpxC family. It depends on Zn(2+) as a cofactor.

It catalyses the reaction a UDP-3-O-[(3R)-3-hydroxyacyl]-N-acetyl-alpha-D-glucosamine + H2O = a UDP-3-O-[(3R)-3-hydroxyacyl]-alpha-D-glucosamine + acetate. It functions in the pathway glycolipid biosynthesis; lipid IV(A) biosynthesis; lipid IV(A) from (3R)-3-hydroxytetradecanoyl-[acyl-carrier-protein] and UDP-N-acetyl-alpha-D-glucosamine: step 2/6. Its function is as follows. Catalyzes the hydrolysis of UDP-3-O-myristoyl-N-acetylglucosamine to form UDP-3-O-myristoylglucosamine and acetate, the committed step in lipid A biosynthesis. The chain is UDP-3-O-acyl-N-acetylglucosamine deacetylase from Pseudoalteromonas atlantica (strain T6c / ATCC BAA-1087).